The primary structure comprises 106 residues: Ferredoxin (106 aa).

The [3Fe-4S] cluster site is built by cysteine 8 and cysteine 16. Cysteine 20, cysteine 39, cysteine 42, and cysteine 45 together coordinate [4Fe-4S] cluster. Residues 30 to 59 enclose the 4Fe-4S ferredoxin-type domain; that stretch reads RMLYIHPDECVDCGACEPVCPVEAIYYEDD. Cysteine 49 is a [3Fe-4S] cluster binding site. Positions 81-106 are disordered; sequence PGGASKVGQTDNDPQAIKDLPPQGED.

The cofactor is [4Fe-4S] cluster. [3Fe-4S] cluster is required as a cofactor.

Functionally, ferredoxins are iron-sulfur proteins that transfer electrons in a wide variety of metabolic reactions. In Mycolicibacterium smegmatis (Mycobacterium smegmatis), this protein is Ferredoxin (fdxA).